Consider the following 690-residue polypeptide: Glycine--tRNA ligase beta subunit (690 aa).

The protein belongs to the class-II aminoacyl-tRNA synthetase family. Tetramer of two alpha and two beta subunits.

It is found in the cytoplasm. The catalysed reaction is tRNA(Gly) + glycine + ATP = glycyl-tRNA(Gly) + AMP + diphosphate. The polypeptide is Glycine--tRNA ligase beta subunit (Buchnera aphidicola subsp. Acyrthosiphon pisum (strain Tuc7)).